A 246-amino-acid chain; its full sequence is Pyridoxine 5'-phosphate synthase (246 aa).

Residue Asn12 coordinates 3-amino-2-oxopropyl phosphate. Residue 14–15 coordinates 1-deoxy-D-xylulose 5-phosphate; it reads DH. Arg23 is a binding site for 3-amino-2-oxopropyl phosphate. Catalysis depends on His48, which acts as the Proton acceptor. Residues Arg50 and His55 each coordinate 1-deoxy-D-xylulose 5-phosphate. The active-site Proton acceptor is the Glu75. Thr105 contacts 1-deoxy-D-xylulose 5-phosphate. The Proton donor role is filled by His196. Residues Gly197 and 218 to 219 each bind 3-amino-2-oxopropyl phosphate; that span reads GH.

This sequence belongs to the PNP synthase family. Homooctamer; tetramer of dimers.

The protein localises to the cytoplasm. It carries out the reaction 3-amino-2-oxopropyl phosphate + 1-deoxy-D-xylulose 5-phosphate = pyridoxine 5'-phosphate + phosphate + 2 H2O + H(+). The protein operates within cofactor biosynthesis; pyridoxine 5'-phosphate biosynthesis; pyridoxine 5'-phosphate from D-erythrose 4-phosphate: step 5/5. Its function is as follows. Catalyzes the complicated ring closure reaction between the two acyclic compounds 1-deoxy-D-xylulose-5-phosphate (DXP) and 3-amino-2-oxopropyl phosphate (1-amino-acetone-3-phosphate or AAP) to form pyridoxine 5'-phosphate (PNP) and inorganic phosphate. The protein is Pyridoxine 5'-phosphate synthase of Thioalkalivibrio sulfidiphilus (strain HL-EbGR7).